A 1360-amino-acid chain; its full sequence is Probable inactive protein kinase DDB_G0270444 (1360 aa).

WD repeat units lie at residues serine 44 to leucine 83, isoleucine 109 to asparagine 152, threonine 166 to threonine 205, and glycine 208 to glycine 247. The Protein kinase domain maps to glutamate 636–isoleucine 954. Low complexity predominate over residues lysine 959–glutamine 979. Disordered regions lie at residues lysine 959 to threonine 989, isoleucine 1258 to glutamate 1311, and glutamate 1331 to phenylalanine 1360. 2 coiled-coil regions span residues serine 1014–glutamate 1269 and asparagine 1297–aspartate 1352. Positions leucine 1291–aspartate 1300 are enriched in basic and acidic residues. 2 stretches are compositionally biased toward acidic residues: residues histidine 1301–glutamate 1311 and glutamate 1331–threonine 1354.

Belongs to the protein kinase superfamily. CMGC Ser/Thr protein kinase family.

The protein is Probable inactive protein kinase DDB_G0270444 of Dictyostelium discoideum (Social amoeba).